Reading from the N-terminus, the 266-residue chain is Putative pyruvate, phosphate dikinase regulatory protein (266 aa).

149–156 (GVSRTSKT) lines the ADP pocket.

Belongs to the pyruvate, phosphate/water dikinase regulatory protein family. PDRP subfamily.

It catalyses the reaction N(tele)-phospho-L-histidyl/L-threonyl-[pyruvate, phosphate dikinase] + ADP = N(tele)-phospho-L-histidyl/O-phospho-L-threonyl-[pyruvate, phosphate dikinase] + AMP + H(+). The catalysed reaction is N(tele)-phospho-L-histidyl/O-phospho-L-threonyl-[pyruvate, phosphate dikinase] + phosphate + H(+) = N(tele)-phospho-L-histidyl/L-threonyl-[pyruvate, phosphate dikinase] + diphosphate. Functionally, bifunctional serine/threonine kinase and phosphorylase involved in the regulation of the pyruvate, phosphate dikinase (PPDK) by catalyzing its phosphorylation/dephosphorylation. In Geobacillus thermodenitrificans (strain NG80-2), this protein is Putative pyruvate, phosphate dikinase regulatory protein.